The primary structure comprises 167 residues: Crossover junction endodeoxyribonuclease RuvC (167 aa).

Catalysis depends on residues Asp-8, Glu-67, and Asp-139. Mg(2+) is bound by residues Asp-8, Glu-67, and Asp-139.

It belongs to the RuvC family. As to quaternary structure, homodimer which binds Holliday junction (HJ) DNA. The HJ becomes 2-fold symmetrical on binding to RuvC with unstacked arms; it has a different conformation from HJ DNA in complex with RuvA. In the full resolvosome a probable DNA-RuvA(4)-RuvB(12)-RuvC(2) complex forms which resolves the HJ. Requires Mg(2+) as cofactor.

It localises to the cytoplasm. The enzyme catalyses Endonucleolytic cleavage at a junction such as a reciprocal single-stranded crossover between two homologous DNA duplexes (Holliday junction).. In terms of biological role, the RuvA-RuvB-RuvC complex processes Holliday junction (HJ) DNA during genetic recombination and DNA repair. Endonuclease that resolves HJ intermediates. Cleaves cruciform DNA by making single-stranded nicks across the HJ at symmetrical positions within the homologous arms, yielding a 5'-phosphate and a 3'-hydroxyl group; requires a central core of homology in the junction. The consensus cleavage sequence is 5'-(A/T)TT(C/G)-3'. Cleavage occurs on the 3'-side of the TT dinucleotide at the point of strand exchange. HJ branch migration catalyzed by RuvA-RuvB allows RuvC to scan DNA until it finds its consensus sequence, where it cleaves and resolves the cruciform DNA. This chain is Crossover junction endodeoxyribonuclease RuvC, found in Halorhodospira halophila (strain DSM 244 / SL1) (Ectothiorhodospira halophila (strain DSM 244 / SL1)).